A 106-amino-acid chain; its full sequence is 3-phenylpropionate/cinnamic acid dioxygenase ferredoxin subunit (106 aa).

Positions 4–99 (IYACPVADVP…VHVEGGDIFI (96 aa)) constitute a Rieske domain. The [2Fe-2S] cluster site is built by C42, H44, C62, and H65.

Belongs to the bacterial ring-hydroxylating dioxygenase ferredoxin component family. As to quaternary structure, this dioxygenase system consists of four proteins: the two subunits of the hydroxylase component (HcaE and HcaF), a ferredoxin (HcaC) and a ferredoxin reductase (HcaD). Requires [2Fe-2S] cluster as cofactor.

It participates in aromatic compound metabolism; 3-phenylpropanoate degradation. In terms of biological role, part of the multicomponent 3-phenylpropionate dioxygenase, that converts 3-phenylpropionic acid (PP) and cinnamic acid (CI) into 3-phenylpropionate-dihydrodiol (PP-dihydrodiol) and cinnamic acid-dihydrodiol (CI-dihydrodiol), respectively. This protein seems to be a 2Fe-2S ferredoxin. In Escherichia coli O139:H28 (strain E24377A / ETEC), this protein is 3-phenylpropionate/cinnamic acid dioxygenase ferredoxin subunit.